The primary structure comprises 261 residues: tRNA pseudouridine synthase A (261 aa).

Asp51 serves as the catalytic Nucleophile. Tyr109 contributes to the substrate binding site.

This sequence belongs to the tRNA pseudouridine synthase TruA family. As to quaternary structure, homodimer.

The enzyme catalyses uridine(38/39/40) in tRNA = pseudouridine(38/39/40) in tRNA. In terms of biological role, formation of pseudouridine at positions 38, 39 and 40 in the anticodon stem and loop of transfer RNAs. This Shewanella denitrificans (strain OS217 / ATCC BAA-1090 / DSM 15013) protein is tRNA pseudouridine synthase A.